The following is a 783-amino-acid chain: MNPEKDFAPLTPNIVRALNDKLYEKRKVAALEIEKLVREFVAQNNTVQIKHVIQTLSQEFALSQHPHSRKGGLIGLAACSIALGKDSGLYLKELIEPVLTCFNDADSRLRYYACEALYNIVKVARGAVLPHFNVLFDGLSKLAADPDPNVKSGSELLDRLLKDIVTESNKFDLVGFIPLLRERIYSNNQYARQFIISWILVLESVPDINLLDYLPEILDGLFQILGDNGKEIRKMCEVVLGEFLKETKKSPSSVKFAEMANILVIHCQTTDDLIQLTAMCWLREFIQLAGRVMLPYSSGILTAVLPCLAYDDRKRNIKEVASVCNQSLMKLVTPEDDEPDEPRPVVQKQAGPSPEDCAAKQEGAASGGPDGSCDSSFSSGISVFTPASAERAPVTLHLDGIVQVLNCHLSDTAIGMMTRIAVLKWLYHLYIKTPRKMSRHTDSLFPVLLQTLSDESDEVILKDLEVLAEIASSPAGQTDDPGPLDGPDLRVSHSELQAPIPGRAGLLNTPGTKGLECSPSTPTMNSYFYKFMINLLKRFSSERKLLEVRGAFIIRQLCLLLHAESIFHSMADILLREEDLTFASTMVHTLNTILLTSTELFQLRNQLKDLKTPESRNLFCCLYRSWCHKPVTTVSLCFLTQNYRHAYDLIQKFGDLEVTVDFLTEVDKLVQLIECPIFTYLRLQLLDVKSNPYLIKALYGLLMLLPQSSAFQLLSHRLQCVPNPELLQTEDGLKAAPKSQKADSPSIDYAELLQHFERVQKKHLEVRHQRSGRGDHLDRRVVL.

M1 bears the N-acetylmethionine mark. HEAT repeat units lie at residues 5–42 (KDFAPLTPNIVRALNDKLYEKRKVAALEIEKLVREFVA), 89–126 (LYLKELIEPVLTCFNDADSRLRYYACEALYNIVKVARG), 171–208 (FDLVGFIPLLRERIYSNNQYARQFIISWILVLESVPDI), and 212–249 (DYLPEILDGLFQILGDNGKEIRKMCEVVLGEFLKETKK). T11 carries the post-translational modification Phosphothreonine. The tract at residues 331–373 (LVTPEDDEPDEPRPVVQKQAGPSPEDCAAKQEGAASGGPDGSC) is disordered. An HEAT 5 repeat occupies 439–476 (RHTDSLFPVLLQTLSDESDEVILKDLEVLAEIASSPAG). A Phosphoserine modification is found at S518. Residues 561-599 (LHAESIFHSMADILLREEDLTFASTMVHTLNTILLTSTE) form an HEAT 6 repeat. S744 carries the post-translational modification Phosphoserine. The segment at 774 to 778 (GDHLD) is mediates interaction with the PDZ domain of NOS1.

The protein belongs to the VAC14 family. In terms of assembly, forms pentamers. Component of the PI(3,5)P2 regulatory complex/PAS complex, at least composed of PIKFYVE, FIG4 and VAC14. VAC14 nucleates the assembly of the complex and serves as a scaffold by pentamerizing into a star-shaped structure, which can bind a single copy each of PIKFYVE and FIG4 and coordinates their activities. Interacts with NOS1.

The protein localises to the endosome membrane. It is found in the microsome membrane. Functionally, scaffold protein component of the PI(3,5)P2 regulatory complex which regulates both the synthesis and turnover of phosphatidylinositol 3,5-bisphosphate (PtdIns(3,5)P2). Pentamerizes into a star-shaped structure and nucleates the assembly of the complex. The pentamer binds a single copy each of PIKFYVE and FIG4 and coordinates both PIKfyve kinase activity and FIG4 phosphatase activity, being required to maintain normal levels of phosphatidylinositol 3-phosphate (PtdIns(3)P) and phosphatidylinositol 5-phosphate (PtdIns(5)P). Plays a role in the biogenesis of endosome carrier vesicles (ECV) / multivesicular bodies (MVB) transport intermediates from early endosomes. This Bos taurus (Bovine) protein is Protein VAC14 homolog (VAC14).